The chain runs to 317 residues: Acetyl-coenzyme A carboxylase carboxyl transferase subunit alpha (317 aa).

The CoA carboxyltransferase C-terminal domain maps to 40–293; it reads LEKRSADALK…GDIIAASLRS (254 aa).

The protein belongs to the AccA family. Acetyl-CoA carboxylase is a heterohexamer composed of biotin carboxyl carrier protein (AccB), biotin carboxylase (AccC) and two subunits each of ACCase subunit alpha (AccA) and ACCase subunit beta (AccD).

Its subcellular location is the cytoplasm. The catalysed reaction is N(6)-carboxybiotinyl-L-lysyl-[protein] + acetyl-CoA = N(6)-biotinyl-L-lysyl-[protein] + malonyl-CoA. It functions in the pathway lipid metabolism; malonyl-CoA biosynthesis; malonyl-CoA from acetyl-CoA: step 1/1. Component of the acetyl coenzyme A carboxylase (ACC) complex. First, biotin carboxylase catalyzes the carboxylation of biotin on its carrier protein (BCCP) and then the CO(2) group is transferred by the carboxyltransferase to acetyl-CoA to form malonyl-CoA. The protein is Acetyl-coenzyme A carboxylase carboxyl transferase subunit alpha of Brucella abortus (strain S19).